We begin with the raw amino-acid sequence, 282 residues long: Biotin synthase (282 aa).

In terms of domain architecture, Radical SAM core spans 1 to 228; it reads MQEIFLCSIS…NARLMVAGGR (228 aa). Cys17, Cys21, and Cys24 together coordinate [4Fe-4S] cluster. [2Fe-2S] cluster is bound by residues Cys61, Cys96, Cys154, and Arg221.

The protein belongs to the radical SAM superfamily. Biotin synthase family. Homodimer. Requires [4Fe-4S] cluster as cofactor. It depends on [2Fe-2S] cluster as a cofactor.

It catalyses the reaction (4R,5S)-dethiobiotin + (sulfur carrier)-SH + 2 reduced [2Fe-2S]-[ferredoxin] + 2 S-adenosyl-L-methionine = (sulfur carrier)-H + biotin + 2 5'-deoxyadenosine + 2 L-methionine + 2 oxidized [2Fe-2S]-[ferredoxin]. It participates in cofactor biosynthesis; biotin biosynthesis; biotin from 7,8-diaminononanoate: step 2/2. In terms of biological role, catalyzes the conversion of dethiobiotin (DTB) to biotin by the insertion of a sulfur atom into dethiobiotin via a radical-based mechanism. This is Biotin synthase from Helicobacter pylori (strain HPAG1).